The sequence spans 94 residues: Large ribosomal subunit protein bL25 (94 aa).

The protein belongs to the bacterial ribosomal protein bL25 family. As to quaternary structure, part of the 50S ribosomal subunit; part of the 5S rRNA/L5/L18/L25 subcomplex. Contacts the 5S rRNA. Binds to the 5S rRNA independently of L5 and L18.

Functionally, this is one of the proteins that binds to the 5S RNA in the ribosome where it forms part of the central protuberance. The protein is Large ribosomal subunit protein bL25 of Yersinia pestis bv. Antiqua (strain Antiqua).